The following is an 89-amino-acid chain: HssA/B-like protein 21 (89 aa).

It belongs to the hssA/B family.

The sequence is that of HssA/B-like protein 21 (hssl21) from Dictyostelium discoideum (Social amoeba).